Reading from the N-terminus, the 269-residue chain is tRNA pseudouridine synthase A (269 aa).

Residue Asp-55 is the Nucleophile of the active site. Tyr-111 is a substrate binding site.

The protein belongs to the tRNA pseudouridine synthase TruA family.

The enzyme catalyses uridine(38/39/40) in tRNA = pseudouridine(38/39/40) in tRNA. Its function is as follows. Formation of pseudouridine at positions 38, 39 and 40 in the anticodon stem and loop of transfer RNAs. This Methanosarcina acetivorans (strain ATCC 35395 / DSM 2834 / JCM 12185 / C2A) protein is tRNA pseudouridine synthase A.